We begin with the raw amino-acid sequence, 45 residues long: MGLILTRMILNCGCGSSCKCGDSCSCEKNYNKECDNCSCGSNCNF.

It belongs to the metallothionein superfamily. Type 15 family.

Metallothioneins have a high content of cysteine residues that bind various heavy metals. Confers tolerance to cadmium (Cd) and plays a role in Cd and zinc (Zn) homeostasis. The sequence is that of Putative metallothionein-like protein 1B (MT1B) from Arabidopsis thaliana (Mouse-ear cress).